The chain runs to 182 residues: Functional amyloid subunit FapB (182 aa).

The N-terminal stretch at 1 to 18 (MTHSWLLLTVLGCSAAMA) is a signal peptide. The FapB_R1 repeat unit spans residues 22-58 (NQALIDNAGKQYTGVLSVNQAAGNQHQQINSRAISLG). Residues 80–114 (SAAIQGSAFSNGNGILGVNQSAGANNQMINAVRIS) form a FapB_R2 repeat. One copy of the FapB_R3 repeat lies at 150 to 180 (SDQAFTGSRGVVQVNQSAGVGNRMANTLGVT).

This sequence belongs to the FapB/FapC family. In terms of assembly, forms fibrils in vitro; in the presence of FapA the fibrils are slightly narrower. A minor component of purified amyloid fibrils. Fibrils are resistant to boiling in 2% (weight/vol) SDS and require &gt;90% (vol/vol) formic acid to dissolve.

The protein resides in the fimbrium. It localises to the secreted. A minor component of the functional amyloid in this bacterium. Probably nucleates fibril formation; FapB nucleates fibrillation its own, FapA inhibits FapB fibril elongation. Upon overexpression of the endogenous six-gene locus (fapA-fapF) in situ, cells form large clumps during liquid growth, make large amounts of biofilm and produce amyloid fibrils. Expression of the 6 gene operon in E.coli strain BL21(DE3) induces flocculation and biofilm formation with copious extracellular fibrils. This chain is Functional amyloid subunit FapB, found in Pseudomonas fluorescens.